Here is a 210-residue protein sequence, read N- to C-terminus: MTKGILGRKIGMTQVFAENGELIPVTVIAANPNVVLQKKTTETDGYNAIQLGFEDKREKLTNKPEQGHTAKASTTPKRFIREIRDADVDGLEVGQEVKVDVFATGEIVDVTGISKGKGFQGVIKRHGQSRGPMSHGSRYHRRPGSMGPVAPNRVFKGKKLAGRMGGDQVTIQNLEIVQVDTERNLLLVKGNVPGAKKSLVVVQGAVKVSK.

The tract at residues R125–P151 is disordered.

Belongs to the universal ribosomal protein uL3 family. Part of the 50S ribosomal subunit. Forms a cluster with proteins L14 and L19.

In terms of biological role, one of the primary rRNA binding proteins, it binds directly near the 3'-end of the 23S rRNA, where it nucleates assembly of the 50S subunit. In Bacillus cereus (strain Q1), this protein is Large ribosomal subunit protein uL3.